The following is a 418-amino-acid chain: Gamma-glutamyl phosphate reductase (418 aa).

The protein belongs to the gamma-glutamyl phosphate reductase family.

The protein resides in the cytoplasm. It carries out the reaction L-glutamate 5-semialdehyde + phosphate + NADP(+) = L-glutamyl 5-phosphate + NADPH + H(+). It participates in amino-acid biosynthesis; L-proline biosynthesis; L-glutamate 5-semialdehyde from L-glutamate: step 2/2. Catalyzes the NADPH-dependent reduction of L-glutamate 5-phosphate into L-glutamate 5-semialdehyde and phosphate. The product spontaneously undergoes cyclization to form 1-pyrroline-5-carboxylate. The protein is Gamma-glutamyl phosphate reductase of Moorella thermoacetica (strain ATCC 39073 / JCM 9320).